Consider the following 435-residue polypeptide: MNRYHFVGIKGTGMSPLAQILFDMNNEVRGSDVEKAFFTEEALNRKGIEILPFDPENISEDQIVVQGNAFSDDHPEIVRARELGLTIYKYYEFLGELANHYTSVAITGSHGKTSTTGLLAHVMRGIEPTSFLIGDGTGEGVADSKNFVFEACEYKRHFLYYRPDYAIMTNIDFDHSDYFSGLDDVIDAFQEMAKQVKKGIIACGDDENLQQIQANVPLVYYGFGAHNDFRAEQVTSTENGTTFDVFLRDDFYGTFRIPGYGDHSVLNALAVIATCDYENLPKELVKERLETFNGVKRRFSESTLNDQVLVDDYAHHPREISATVEAARKKYGNREVVAIFQPHTYTRLKSFMDDFATALAEADTVYLCDIFGSAREQEGTVTIEDLQSRIEGAHILKRGGTGVLRNHADAVLLFMGAGDIQTYQREYEEVVKLEA.

ATP is bound at residue G108–S114.

This sequence belongs to the MurCDEF family.

It is found in the cytoplasm. The enzyme catalyses UDP-N-acetyl-alpha-D-muramate + L-alanine + ATP = UDP-N-acetyl-alpha-D-muramoyl-L-alanine + ADP + phosphate + H(+). Its pathway is cell wall biogenesis; peptidoglycan biosynthesis. Functionally, cell wall formation. The polypeptide is UDP-N-acetylmuramate--L-alanine ligase (Exiguobacterium sp. (strain ATCC BAA-1283 / AT1b)).